Reading from the N-terminus, the 320-residue chain is Bifunctional phosphoglucose/phosphomannose isomerase (320 aa).

Residues 20-153 (IAKDLTPYKG…NLLGVDKDEL (134 aa)) form the SIS domain. Gly37, Ser38, Ser80, Ser82, Thr85, and Arg132 together coordinate D-fructose 6-phosphate. The active-site Proton acceptor is Glu204. D-fructose 6-phosphate-binding residues include His220 and Lys313. The active-site Proton donor is the His220. Residue Lys313 is the Proton acceptor of the active site.

Belongs to the PGI/PMI family. As to quaternary structure, homodimer.

The catalysed reaction is alpha-D-glucose 6-phosphate = beta-D-fructose 6-phosphate. It catalyses the reaction D-mannose 6-phosphate = D-fructose 6-phosphate. In terms of biological role, dual specificity isomerase that catalyzes the isomerization of both glucose-6-phosphate and mannose-6-phosphate to fructose-6-phosphate. This chain is Bifunctional phosphoglucose/phosphomannose isomerase, found in Aquifex aeolicus (strain VF5).